The sequence spans 885 residues: Insulin receptor substrate 1-A (885 aa).

Residues 1–56 (MNIRRCGHSENFFFIEVGRSAVTGAGEFWMQVDDSVVAQNMHETILEAMKALSDEF) form the IRS-type PTB domain. The interval 56-225 (FRPRSKSQSS…GGFISSDEYG (170 aa)) is disordered. Low complexity-rich tracts occupy residues 61–75 (KSQSSSNCSNPISVP), 99–109 (SATATSPAGGA), 176–197 (SPSATSPVSLSSSSTSGHGSTS), and 205–217 (SSASISGSPSDGG). The residue at position 104 (S104) is a Phosphoserine. Position 257 is a phosphotyrosine; by INSR (Y257). A YXXM motif 1 motif is present at residues 257–260 (YICM). 2 stretches are compositionally biased toward polar residues: residues 263 to 276 (SSSHLQRGPQQRYQ) and 296 to 313 (SSGTSPPTVSHQKTPSQS). Disordered stretches follow at residues 263–282 (SSSHLQRGPQQRYQPSRGEE) and 293–313 (RTHSSGTSPPTVSHQKTPSQS). 5 short sequence motifs (YXXM motif) span residues 318–321 (YTEM), 364–367 (YMPM), 381–384 (YMPM), 409–412 (YMMM), and 451–454 (YINM). Residues Y364 and Y381 each carry the phosphotyrosine; by INSR modification. Y409 is modified (phosphotyrosine). A disordered region spans residues 501 to 581 (NLRISANSGH…LPPEPKSPGE (81 aa)). Positions 504–515 (ISANSGHNLYTE) are enriched in polar residues. The segment covering 516-526 (DSSSSSTSSDS) has biased composition (low complexity). 2 positions are modified to phosphotyrosine; by INSR: Y582 and Y620. Residues 582–584 (YVN) are GRB2-binding. A YXXM motif 7 motif is present at residues 620–623 (YMNM). Over residues 637–660 (TSSYEPPNKPVNSVCPTETCSSSR) the composition is skewed to polar residues. The tract at residues 637 to 665 (TSSYEPPNKPVNSVCPTETCSSSRPPIRG) is disordered. Y672 bears the Phosphotyrosine; by INSR mark. Short sequence motifs (YXXM motif) lie at residues 672 to 675 (YMSM) and 706 to 709 (YAEM). Positions 732 to 803 (ASRSSLLGQG…SGEDVKRHSS (72 aa)) are disordered. Composition is skewed to polar residues over residues 743–758 (GPSAFTRVSLSPNRNP) and 777–792 (ETFSSTPTTARVTTGP). Residues Y834 and Y866 each carry the phosphotyrosine; by INSR modification.

Interacts with the NPXY motif of tyrosine-phosphorylated igf1r and insr via the PTB domain. Binds to phosphatidylinositol 3-kinase p85 subunit at a low level in vitro prior to phosphorylation. Binding is greatly enhanced following tyrosine phosphorylation by insr and probably occurs via the phosphorylated YXXM motifs. In terms of processing, phosphorylation of Tyr-582 is required for grb2-binding.

May mediate the control of various cellular processes by insulin. When phosphorylated by the insulin receptor binds specifically to various cellular proteins containing SH2 domains such as phosphatidylinositol 3-kinase p85 subunit or grb2. Activates phosphatidylinositol 3-kinase when bound to the regulatory p85 subunit. The sequence is that of Insulin receptor substrate 1-A (irs1-a) from Xenopus laevis (African clawed frog).